Here is a 226-residue protein sequence, read N- to C-terminus: N-acetylmuramic acid 6-phosphate phosphatase (226 aa).

The active-site Nucleophile is aspartate 12. Mg(2+) is bound by residues aspartate 12, aspartate 14, and aspartate 171. Aspartate 14 acts as the Proton donor in catalysis.

Belongs to the HAD-like hydrolase superfamily. CbbY/CbbZ/Gph/YieH family. Phosphatase MupP subfamily. It depends on Mg(2+) as a cofactor.

It carries out the reaction N-acetyl-D-muramate 6-phosphate + H2O = N-acetyl-D-muramate + phosphate. It participates in cell wall biogenesis; peptidoglycan recycling. In terms of biological role, specifically catalyzes the dephosphorylation of N-acetylmuramate 6-phosphate (MurNAc-6P) to MurNac. Is involved in peptidoglycan recycling as part of a cell wall recycling pathway that bypasses de novo biosynthesis of the peptidoglycan precursor UDP-MurNAc. Plays a role in intrinsic resistance to fosfomycin, which targets the de novo synthesis of UDP-MurNAc. In Pseudomonas aeruginosa (strain ATCC 15692 / DSM 22644 / CIP 104116 / JCM 14847 / LMG 12228 / 1C / PRS 101 / PAO1), this protein is N-acetylmuramic acid 6-phosphate phosphatase.